A 41-amino-acid polypeptide reads, in one-letter code: Large ribosomal subunit protein bL36 (41 aa).

This sequence belongs to the bacterial ribosomal protein bL36 family.

This is Large ribosomal subunit protein bL36 from Cereibacter sphaeroides (strain ATCC 17029 / ATH 2.4.9) (Rhodobacter sphaeroides).